A 365-amino-acid polypeptide reads, in one-letter code: Cobalt-precorrin-5B C(1)-methyltransferase (365 aa).

Belongs to the CbiD family.

It catalyses the reaction Co-precorrin-5B + S-adenosyl-L-methionine = Co-precorrin-6A + S-adenosyl-L-homocysteine. Its pathway is cofactor biosynthesis; adenosylcobalamin biosynthesis; cob(II)yrinate a,c-diamide from sirohydrochlorin (anaerobic route): step 6/10. Its function is as follows. Catalyzes the methylation of C-1 in cobalt-precorrin-5B to form cobalt-precorrin-6A. The polypeptide is Cobalt-precorrin-5B C(1)-methyltransferase (Moorella thermoacetica (strain ATCC 39073 / JCM 9320)).